A 204-amino-acid chain; its full sequence is DNA-binding transcriptional activator EvgA (204 aa).

In terms of domain architecture, Response regulatory spans 2-117 (NAIIIDDHPL…NIIAAIEAAK (116 aa)). Position 52 is a 4-aspartylphosphate (aspartate 52). An HTH luxR-type domain is found at 137-202 (DQQKLDSLSK…DLYTFAQRNK (66 aa)). Positions 161 to 180 (NNDIAEKMFISNKTVSTYKS) form a DNA-binding region, H-T-H motif.

In terms of assembly, homodimer. In terms of processing, phosphorylated by EvgS.

The protein localises to the cytoplasm. Member of the two-component regulatory system EvgS/EvgA. Regulates the expression of emrKY operon and yfdX. Also seems to control expression of at least one other multidrug efflux operon. This is DNA-binding transcriptional activator EvgA (evgA) from Escherichia coli O157:H7.